The chain runs to 340 residues: SH2 domain-containing adapter protein D (340 aa).

Disordered regions lie at residues 1 to 77 (MAKW…PKHR), 94 to 186 (GGPG…QPWE), and 198 to 230 (VQFD…ERVD). Over residues 98-108 (EELEADTEYLD) the composition is skewed to acidic residues. Residues 171–186 (PQEDERPADEYDQPWE) are compositionally biased toward basic and acidic residues. The region spanning 240–335 (WFHGPLNRAD…AEHLALLYPV (96 aa)) is the SH2 domain.

Tyrosine phosphorylated by ABL.

In terms of biological role, may function as an adapter protein. This Homo sapiens (Human) protein is SH2 domain-containing adapter protein D (SHD).